A 620-amino-acid chain; its full sequence is Probable indole-3-acetic acid-amido synthetase GH3.7 (620 aa).

Belongs to the IAA-amido conjugating enzyme family. In terms of tissue distribution, ubiquitous.

May catalyze the synthesis of indole-3-acetic acid (IAA)-amino acid conjugates, providing a mechanism for the plant to cope with the presence of excess auxin. This is Probable indole-3-acetic acid-amido synthetase GH3.7 (GH3.7) from Oryza sativa subsp. japonica (Rice).